The following is a 383-amino-acid chain: Protein pelota homolog (383 aa).

The protein belongs to the eukaryotic release factor 1 family. Pelota subfamily. As to quaternary structure, component of the Pelota-HBS1L complex, also named Dom34-Hbs1 complex, composed of PELO and HBS1L. The cofactor is a divalent metal cation.

It localises to the cytoplasm. Component of the Pelota-HBS1L complex, a complex that recognizes stalled ribosomes and triggers the No-Go Decay (NGD) pathway. In the Pelota-HBS1L complex, PELO recognizes ribosomes stalled at the 3' end of an mRNA and engages stalled ribosomes by destabilizing mRNA in the mRNA channel. Following mRNA extraction from stalled ribosomes by the SKI complex, the Pelota-HBS1L complex promotes recruitment of ABCE1, which drives the disassembly of stalled ribosomes, followed by degradation of damaged mRNAs as part of the NGD pathway. The chain is Protein pelota homolog (pelo) from Xenopus laevis (African clawed frog).